A 159-amino-acid polypeptide reads, in one-letter code: Probable epoxidase scpX (159 aa).

The signal sequence occupies residues M1–D25. The next 2 membrane-spanning stretches (helical) occupy residues W59–S79 and L96–I116. 2 N-linked (GlcNAc...) asparagine glycosylation sites follow: N124 and N136. Residues R139–L159 form a helical membrane-spanning segment.

It belongs to the epoxidase xenD family.

The protein resides in the membrane. It participates in mycotoxin biosynthesis. Probable epoxidase; part of the gene scp cluster that mediates the biosynthesis of a hirsutellone-like compound that has still to be identified. In Mollisia scopiformis (Conifer needle endophyte fungus), this protein is Probable epoxidase scpX.